A 270-amino-acid chain; its full sequence is Putative carboxymethylenebutenolidase (270 aa).

Active-site residues include Cys-147, Asp-204, and His-236.

The protein belongs to the dienelactone hydrolase family.

The enzyme catalyses 2-(5-oxo-2,5-dihydrofuran-2-ylidene)acetate + H2O = 4-oxohex-2-enedioate + H(+). The sequence is that of Putative carboxymethylenebutenolidase (ysgA) from Salmonella typhi.